Reading from the N-terminus, the 530-residue chain is Bifunctional purine biosynthesis protein PurH (530 aa).

Residues Met1 to Val148 enclose the MGS-like domain.

This sequence belongs to the PurH family.

The catalysed reaction is (6R)-10-formyltetrahydrofolate + 5-amino-1-(5-phospho-beta-D-ribosyl)imidazole-4-carboxamide = 5-formamido-1-(5-phospho-D-ribosyl)imidazole-4-carboxamide + (6S)-5,6,7,8-tetrahydrofolate. The enzyme catalyses IMP + H2O = 5-formamido-1-(5-phospho-D-ribosyl)imidazole-4-carboxamide. The protein operates within purine metabolism; IMP biosynthesis via de novo pathway; 5-formamido-1-(5-phospho-D-ribosyl)imidazole-4-carboxamide from 5-amino-1-(5-phospho-D-ribosyl)imidazole-4-carboxamide (10-formyl THF route): step 1/1. Its pathway is purine metabolism; IMP biosynthesis via de novo pathway; IMP from 5-formamido-1-(5-phospho-D-ribosyl)imidazole-4-carboxamide: step 1/1. The sequence is that of Bifunctional purine biosynthesis protein PurH from Vibrio campbellii (strain ATCC BAA-1116).